The primary structure comprises 252 residues: Hydroxyacylglutathione hydrolase (252 aa).

7 residues coordinate Zn(2+): histidine 52, histidine 54, aspartate 56, histidine 57, histidine 107, aspartate 128, and histidine 166.

Belongs to the metallo-beta-lactamase superfamily. Glyoxalase II family. Monomer. It depends on Zn(2+) as a cofactor.

The enzyme catalyses an S-(2-hydroxyacyl)glutathione + H2O = a 2-hydroxy carboxylate + glutathione + H(+). The protein operates within secondary metabolite metabolism; methylglyoxal degradation; (R)-lactate from methylglyoxal: step 2/2. Its function is as follows. Thiolesterase that catalyzes the hydrolysis of S-D-lactoyl-glutathione to form glutathione and D-lactic acid. The chain is Hydroxyacylglutathione hydrolase from Neisseria meningitidis serogroup C (strain 053442).